The sequence spans 114 residues: Ribulose bisphosphate carboxylase small subunit 2 (114 aa).

The protein belongs to the RuBisCO small chain family. Heterohexadecamer of 8 large and 8 small subunits. Forms a CsoS2-CsoS1-RuBisCO complex.

Its subcellular location is the carboxysome. In terms of biological role, ruBisCO catalyzes two reactions: the carboxylation of D-ribulose 1,5-bisphosphate, the primary event in carbon dioxide fixation, as well as the oxidative fragmentation of the pentose substrate. Both reactions occur simultaneously and in competition at the same active site. Although the small subunit is not catalytic it is essential for maximal activity. Its function is as follows. Replacing the endogenous type I ccbLS genes in H.neapolitanus with this carboxysomally targeted enzyme reconstitutes RuBisCO with about 25% of normal activity; the active enzyme is targeted to carboxysomes. In Hydrogenovibrio crunogenus (strain DSM 25203 / XCL-2) (Thiomicrospira crunogena), this protein is Ribulose bisphosphate carboxylase small subunit 2.